The following is a 42-amino-acid chain: Photosystem II reaction center protein J (42 aa).

A helical membrane pass occupies residues I10–F30.

Belongs to the PsbJ family. As to quaternary structure, PSII is composed of 1 copy each of membrane proteins PsbA, PsbB, PsbC, PsbD, PsbE, PsbF, PsbH, PsbI, PsbJ, PsbK, PsbL, PsbM, PsbT, PsbX, PsbY, PsbZ, Psb30/Ycf12, at least 3 peripheral proteins of the oxygen-evolving complex and a large number of cofactors. It forms dimeric complexes.

Its subcellular location is the plastid. The protein localises to the chloroplast thylakoid membrane. In terms of biological role, one of the components of the core complex of photosystem II (PSII). PSII is a light-driven water:plastoquinone oxidoreductase that uses light energy to abstract electrons from H(2)O, generating O(2) and a proton gradient subsequently used for ATP formation. It consists of a core antenna complex that captures photons, and an electron transfer chain that converts photonic excitation into a charge separation. The protein is Photosystem II reaction center protein J of Staurastrum punctulatum (Green alga).